A 743-amino-acid chain; its full sequence is MAWGWWKRKRRWWWRKRWTRGRLRRRWPRRSRRRPRRRRVRRRRRWRRGRPRRRLYRRGRRYRRKRKRAKITIRQWQPAMTRRCFIRGHMPALICGWGAYASNYTSHLEDKIVKGPYGGGHATFRFSLQVLCEEHLKHHNYWTRSNQDLELALYYGATIKFYRSPDTDFIVTYQRKSPLGGNILTAPSLHPAEAMLSKNKILIPSLQTKPKGKKTVKVNIPPPTLFVHKWYFQKDICDLTLFNLNVVAADLRFPFCSPQTDNVCITFQVLAAEYNNFLSTTLGTTNESTFIENFLKVAFPDDKPRHSNILNTFRTEGCMSHPQLQKFKPPNTGPGENKYFFTPDGLWGDPIYIYNNGVQQQTAQQIREKIKKNMENYYAKIVEENTIITKGSKAHCHLTGIFSPPFLNIGRVAREFPGLYTDVVYNPWTDKGKGNKIWLDSLTKSDNIYDPRQSILLMADMPLYIMLNGYIDWAKKERNNWGLATQYRLLLTCPYTFPRLYVETNPNYGYVPYSESFGAGQMPDKNPYVPITWRGKWYPHILHQEAVINDIVISGPFTPKDTKPVMQLNMKYSFRFTWGGNPISTQIVKDPCTQPTFEIPGGGNIPRRIQVINPKVLGPSYSFRSFDLRRDMFSGSSLKRVSEQQETSEFLFSGGKRPRIDLPKYVPPEEDFNIQERQQREQRPWTSESESEAEAQEETQAGSVREQLQQQLQEQFQLRRGLKCLFEQLVRTQQGVHVDPCLV.

The segment at 665–706 is disordered; sequence YVPPEEDFNIQERQQREQRPWTSESESEAEAQEETQAGSVRE.

The protein belongs to the anelloviridae capsid protein family.

It is found in the virion. Functionally, self assemble to form an icosahedral capsid. The chain is Capsid protein from Torque teno virus (isolate Human/China/CT39F/2001) (TTV).